A 415-amino-acid polypeptide reads, in one-letter code: Multifunctional CCA protein (415 aa).

The ATP site is built by G8 and R11. CTP-binding residues include G8 and R11. E21 and D23 together coordinate Mg(2+). ATP is bound by residues R91, R137, and R140. CTP-binding residues include R91, R137, and R140. The HD domain maps to 228 to 329 (AGTHTLMALD…VELFEGLDLF (102 aa)).

This sequence belongs to the tRNA nucleotidyltransferase/poly(A) polymerase family. Bacterial CCA-adding enzyme type 1 subfamily. In terms of assembly, monomer. Can also form homodimers and oligomers. Mg(2+) serves as cofactor. Requires Ni(2+) as cofactor.

It carries out the reaction a tRNA precursor + 2 CTP + ATP = a tRNA with a 3' CCA end + 3 diphosphate. The enzyme catalyses a tRNA with a 3' CCA end + 2 CTP + ATP = a tRNA with a 3' CCACCA end + 3 diphosphate. Its function is as follows. Catalyzes the addition and repair of the essential 3'-terminal CCA sequence in tRNAs without using a nucleic acid template. Adds these three nucleotides in the order of C, C, and A to the tRNA nucleotide-73, using CTP and ATP as substrates and producing inorganic pyrophosphate. tRNA 3'-terminal CCA addition is required both for tRNA processing and repair. Also involved in tRNA surveillance by mediating tandem CCA addition to generate a CCACCA at the 3' terminus of unstable tRNAs. While stable tRNAs receive only 3'-terminal CCA, unstable tRNAs are marked with CCACCA and rapidly degraded. The polypeptide is Multifunctional CCA protein (Halorhodospira halophila (strain DSM 244 / SL1) (Ectothiorhodospira halophila (strain DSM 244 / SL1))).